The chain runs to 128 residues: Aspartate 1-decarboxylase (128 aa).

Catalysis depends on Ser-25, which acts as the Schiff-base intermediate with substrate; via pyruvic acid. The residue at position 25 (Ser-25) is a Pyruvic acid (Ser). A substrate-binding site is contributed by Thr-57. Catalysis depends on Tyr-58, which acts as the Proton donor. Residue 73-75 coordinates substrate; sequence GAA.

This sequence belongs to the PanD family. In terms of assembly, heterooctamer of four alpha and four beta subunits. Pyruvate serves as cofactor. In terms of processing, is synthesized initially as an inactive proenzyme, which is activated by self-cleavage at a specific serine bond to produce a beta-subunit with a hydroxyl group at its C-terminus and an alpha-subunit with a pyruvoyl group at its N-terminus.

The protein resides in the cytoplasm. It carries out the reaction L-aspartate + H(+) = beta-alanine + CO2. Its pathway is cofactor biosynthesis; (R)-pantothenate biosynthesis; beta-alanine from L-aspartate: step 1/1. Its function is as follows. Catalyzes the pyruvoyl-dependent decarboxylation of aspartate to produce beta-alanine. The sequence is that of Aspartate 1-decarboxylase from Ruminiclostridium cellulolyticum (strain ATCC 35319 / DSM 5812 / JCM 6584 / H10) (Clostridium cellulolyticum).